A 405-amino-acid polypeptide reads, in one-letter code: SPbeta prophage-derived uncharacterized protein YonJ (405 aa).

A coiled-coil region spans residues 72-101 (DESNNSLLELELKKVEIMEERKKLQAVKHE).

The polypeptide is SPbeta prophage-derived uncharacterized protein YonJ (yonJ) (Bacillus subtilis (strain 168)).